Here is a 29-residue protein sequence, read N- to C-terminus: Cytochrome b6-f complex subunit 8 (29 aa).

The chain crosses the membrane as a helical span at residues 3–23 (IVSIAWAALMVVFSFSLSLVV).

The protein belongs to the PetN family. The 4 large subunits of the cytochrome b6-f complex are cytochrome b6, subunit IV (17 kDa polypeptide, PetD), cytochrome f and the Rieske protein, while the 4 small subunits are PetG, PetL, PetM and PetN. The complex functions as a dimer.

It is found in the plastid. Its subcellular location is the chloroplast thylakoid membrane. In terms of biological role, component of the cytochrome b6-f complex, which mediates electron transfer between photosystem II (PSII) and photosystem I (PSI), cyclic electron flow around PSI, and state transitions. In Phaseolus vulgaris (Kidney bean), this protein is Cytochrome b6-f complex subunit 8.